The following is a 467-amino-acid chain: GTPase Der (467 aa).

2 EngA-type G domains span residues 25-188 and 199-372; these read PVVA…PEAP and RRVA…ASWE. GTP is bound by residues 31 to 38, 78 to 82, 140 to 143, 205 to 212, 252 to 256, and 317 to 320; these read GRPNVGKS, DTGGW, NKAD, DTAGL, and NKWD. Residues 373–455 form the KH-like domain; the sequence is TRVPTAQLNA…PIEIAVRPRK (83 aa).

Belongs to the TRAFAC class TrmE-Era-EngA-EngB-Septin-like GTPase superfamily. EngA (Der) GTPase family. Associates with the 50S ribosomal subunit.

GTPase that plays an essential role in the late steps of ribosome biogenesis. The protein is GTPase Der of Salinispora arenicola (strain CNS-205).